Reading from the N-terminus, the 237-residue chain is UPF0173 metal-dependent hydrolase HQ_3368A (237 aa).

Belongs to the UPF0173 family.

This Haloquadratum walsbyi (strain DSM 16790 / HBSQ001) protein is UPF0173 metal-dependent hydrolase HQ_3368A.